We begin with the raw amino-acid sequence, 190 residues long: Lipocalin Can f 6.0101 (190 aa).

The signal sequence occupies residues Met-1 to Ala-15. Residues Ser-43–Ser-54 form an igE-binding region. N-linked (GlcNAc...) asparagine glycans are attached at residues Asn-52 and Asn-67. The igE-binding stretch occupies residues Thr-76–Thr-83. A disulfide bridge links Cys-82 with Cys-175. Residue Asn-90 is glycosylated (N-linked (GlcNAc...) asparagine). Residues Lys-91–Glu-97 are igE-binding. Residues Val-100–Arg-109 form a no IgE-binding region. IgE-binding stretches follow at residues Asn-125–Phe-132 and Gly-139–Phe-152.

Belongs to the calycin superfamily. Lipocalin family. As to quaternary structure, monomer. Expressed in saliva (at protein level). Expressed in dander (at protein level). According to PubMed:22104604, expressed in submaxillary gland. In contrast, according to PubMed:22515174, not expressed in submaxillary gland. Expressed in bladder and skin, but not in tongue.

The protein localises to the secreted. In Canis lupus familiaris (Dog), this protein is Lipocalin Can f 6.0101.